The primary structure comprises 698 residues: Elongation factor G 1 (698 aa).

The region spanning 8-290 (ERYRNIGIVA…AVVDYLPAPI (283 aa)) is the tr-type G domain. Residues 17-24 (AHVDAGKT), 88-92 (DTPGH), and 142-145 (NKMD) each bind GTP.

The protein belongs to the TRAFAC class translation factor GTPase superfamily. Classic translation factor GTPase family. EF-G/EF-2 subfamily.

The protein resides in the cytoplasm. Functionally, catalyzes the GTP-dependent ribosomal translocation step during translation elongation. During this step, the ribosome changes from the pre-translocational (PRE) to the post-translocational (POST) state as the newly formed A-site-bound peptidyl-tRNA and P-site-bound deacylated tRNA move to the P and E sites, respectively. Catalyzes the coordinated movement of the two tRNA molecules, the mRNA and conformational changes in the ribosome. The sequence is that of Elongation factor G 1 from Shewanella denitrificans (strain OS217 / ATCC BAA-1090 / DSM 15013).